Consider the following 230-residue polypeptide: Small ribosomal subunit protein uS3 (230 aa).

Residues 39-107 (VREYLFKRLK…PVHINIEEVR (69 aa)) enclose the KH type-2 domain.

Belongs to the universal ribosomal protein uS3 family. As to quaternary structure, part of the 30S ribosomal subunit. Forms a tight complex with proteins S10 and S14.

Binds the lower part of the 30S subunit head. Binds mRNA in the 70S ribosome, positioning it for translation. This chain is Small ribosomal subunit protein uS3, found in Alcanivorax borkumensis (strain ATCC 700651 / DSM 11573 / NCIMB 13689 / SK2).